Reading from the N-terminus, the 344-residue chain is S-adenosylmethionine:tRNA ribosyltransferase-isomerase (344 aa).

The protein belongs to the QueA family. Monomer.

The protein resides in the cytoplasm. The enzyme catalyses 7-aminomethyl-7-carbaguanosine(34) in tRNA + S-adenosyl-L-methionine = epoxyqueuosine(34) in tRNA + adenine + L-methionine + 2 H(+). It participates in tRNA modification; tRNA-queuosine biosynthesis. In terms of biological role, transfers and isomerizes the ribose moiety from AdoMet to the 7-aminomethyl group of 7-deazaguanine (preQ1-tRNA) to give epoxyqueuosine (oQ-tRNA). The sequence is that of S-adenosylmethionine:tRNA ribosyltransferase-isomerase from Nitrosococcus oceani (strain ATCC 19707 / BCRC 17464 / JCM 30415 / NCIMB 11848 / C-107).